We begin with the raw amino-acid sequence, 604 residues long: UvrABC system protein C (604 aa).

One can recognise a GIY-YIG domain in the interval 12–90 (TAPGVYLMRD…IKQHQPRYNL (79 aa)). Residues 200–235 (KDLVSGFRQRMKEAAEGLHYEEAARWRDLLKAIDTT) enclose the UVR domain.

Belongs to the UvrC family. In terms of assembly, interacts with UvrB in an incision complex.

It localises to the cytoplasm. Functionally, the UvrABC repair system catalyzes the recognition and processing of DNA lesions. UvrC both incises the 5' and 3' sides of the lesion. The N-terminal half is responsible for the 3' incision and the C-terminal half is responsible for the 5' incision. This Trichlorobacter lovleyi (strain ATCC BAA-1151 / DSM 17278 / SZ) (Geobacter lovleyi) protein is UvrABC system protein C.